Consider the following 221-residue polypeptide: Protein GrpE (221 aa).

Positions 1-43 (MFTNPFGRKKDMSDDQKKNNQPDTEADNAENIKFAADDTELRA) are disordered. The span at 8–20 (RKKDMSDDQKKNN) shows a compositional bias: basic and acidic residues.

The protein belongs to the GrpE family. As to quaternary structure, homodimer.

The protein resides in the cytoplasm. Its function is as follows. Participates actively in the response to hyperosmotic and heat shock by preventing the aggregation of stress-denatured proteins, in association with DnaK and GrpE. It is the nucleotide exchange factor for DnaK and may function as a thermosensor. Unfolded proteins bind initially to DnaJ; upon interaction with the DnaJ-bound protein, DnaK hydrolyzes its bound ATP, resulting in the formation of a stable complex. GrpE releases ADP from DnaK; ATP binding to DnaK triggers the release of the substrate protein, thus completing the reaction cycle. Several rounds of ATP-dependent interactions between DnaJ, DnaK and GrpE are required for fully efficient folding. This is Protein GrpE from Deinococcus radiodurans (strain ATCC 13939 / DSM 20539 / JCM 16871 / CCUG 27074 / LMG 4051 / NBRC 15346 / NCIMB 9279 / VKM B-1422 / R1).